Here is a 64-residue protein sequence, read N- to C-terminus: Large ribosomal subunit protein bL33c (64 aa).

It belongs to the bacterial ribosomal protein bL33 family.

Its subcellular location is the plastid. The protein localises to the chloroplast. In Trieres chinensis (Marine centric diatom), this protein is Large ribosomal subunit protein bL33c (rpl33).